The primary structure comprises 240 residues: MKRPSGRAADQLRSIRITRNYTKHAEGSVLVEFGDTKVICTVSVENGVPRFLKGQGQGWLTAEYGMLPRATGERNQREASRGKQGGRTLEIQRLIGRSLRAALDMSKLGDLTLYVDCDVIQADGGTRTASITGAMVALVDALKVIKKRGGLKGGDPLKQMIGAVSVGMYQGEPVLDLDYLEDSAAETDLNVVMTSTGGFIEVQGTAEGAPFQPEELNAMLELAKKGMNEIFELQKAALAD.

Phosphate-binding positions include Arg-87 and 125–127 (GTR).

Belongs to the RNase PH family. Homohexameric ring arranged as a trimer of dimers.

The catalysed reaction is tRNA(n+1) + phosphate = tRNA(n) + a ribonucleoside 5'-diphosphate. In terms of biological role, phosphorolytic 3'-5' exoribonuclease that plays an important role in tRNA 3'-end maturation. Removes nucleotide residues following the 3'-CCA terminus of tRNAs; can also add nucleotides to the ends of RNA molecules by using nucleoside diphosphates as substrates, but this may not be physiologically important. Probably plays a role in initiation of 16S rRNA degradation (leading to ribosome degradation) during starvation. This Pseudomonas fluorescens (strain Pf0-1) protein is Ribonuclease PH.